A 311-amino-acid chain; its full sequence is Porphobilinogen deaminase (311 aa).

C245 carries the S-(dipyrrolylmethanemethyl)cysteine modification.

The protein belongs to the HMBS family. In terms of assembly, monomer. The cofactor is dipyrromethane.

The catalysed reaction is 4 porphobilinogen + H2O = hydroxymethylbilane + 4 NH4(+). It functions in the pathway porphyrin-containing compound metabolism; protoporphyrin-IX biosynthesis; coproporphyrinogen-III from 5-aminolevulinate: step 2/4. In terms of biological role, tetrapolymerization of the monopyrrole PBG into the hydroxymethylbilane pre-uroporphyrinogen in several discrete steps. This is Porphobilinogen deaminase from Acinetobacter baylyi (strain ATCC 33305 / BD413 / ADP1).